A 197-amino-acid polypeptide reads, in one-letter code: NADH-quinone oxidoreductase subunit C (197 aa).

This sequence belongs to the complex I 30 kDa subunit family. NDH-1 is composed of 14 different subunits. Subunits NuoB, C, D, E, F, and G constitute the peripheral sector of the complex.

The protein resides in the cell inner membrane. It carries out the reaction a quinone + NADH + 5 H(+)(in) = a quinol + NAD(+) + 4 H(+)(out). NDH-1 shuttles electrons from NADH, via FMN and iron-sulfur (Fe-S) centers, to quinones in the respiratory chain. The immediate electron acceptor for the enzyme in this species is believed to be ubiquinone. Couples the redox reaction to proton translocation (for every two electrons transferred, four hydrogen ions are translocated across the cytoplasmic membrane), and thus conserves the redox energy in a proton gradient. This chain is NADH-quinone oxidoreductase subunit C, found in Caulobacter vibrioides (strain ATCC 19089 / CIP 103742 / CB 15) (Caulobacter crescentus).